A 149-amino-acid polypeptide reads, in one-letter code: Large ribosomal subunit protein uL15 (149 aa).

The segment at G30–Q63 is disordered. Basic residues predominate over residues G36–G49.

It belongs to the universal ribosomal protein uL15 family. As to quaternary structure, part of the 50S ribosomal subunit.

Binds to the 23S rRNA. The chain is Large ribosomal subunit protein uL15 from Xylella fastidiosa (strain 9a5c).